The primary structure comprises 171 residues: Transcriptional repressor NrdR (171 aa).

The segment at 1–21 (MQCPHCQHTDSRVLESRSSEN) is disordered. A zinc finger lies at 3–34 (CPHCQHTDSRVLESRSSENGQSIRRRRECLQC). Residues 7 to 18 (QHTDSRVLESRS) show a composition bias toward basic and acidic residues. The ATP-cone domain occupies 49 to 139 (ITVIKKDGKR…VYGNFQGIRD (91 aa)).

This sequence belongs to the NrdR family. Zn(2+) serves as cofactor.

Functionally, negatively regulates transcription of bacterial ribonucleotide reductase nrd genes and operons by binding to NrdR-boxes. This Microcystis aeruginosa (strain NIES-843 / IAM M-2473) protein is Transcriptional repressor NrdR.